The primary structure comprises 216 residues: RNA pyrophosphohydrolase (216 aa).

Residues 6-149 form the Nudix hydrolase domain; the sequence is GFRPNVGIIL…KRDVYQLALT (144 aa). Positions 38 to 59 match the Nudix box motif; sequence GGIKYGETPMQAMYRELHEETG. Positions 159–191 are disordered; it reads AQRTDKSRGPRAPRYPRVANGHAASETPAAIDT.

It belongs to the Nudix hydrolase family. RppH subfamily. A divalent metal cation is required as a cofactor.

Accelerates the degradation of transcripts by removing pyrophosphate from the 5'-end of triphosphorylated RNA, leading to a more labile monophosphorylated state that can stimulate subsequent ribonuclease cleavage. The sequence is that of RNA pyrophosphohydrolase from Burkholderia pseudomallei (strain 668).